Here is a 209-residue protein sequence, read N- to C-terminus: Abscisic acid receptor PYL5 (209 aa).

Positions 44–196 are START-like; it reads HAPGEHQCSS…NLTSLAEVSE (153 aa). An intrachain disulfide couples C51 to C177. Abscisate is bound by residues K80, 109 to 114, 136 to 142, and E161; these read ATTSTE and RLRNYSS. A Gate loop motif is present at residues 105–109; it reads TGLPA. Residues 135-137 carry the Latch loop motif; sequence HRL.

It belongs to the PYR/PYL/RCAR abscisic acid intracellular receptor family. Monomer. Interacts with PP2C30. Binding to PP2C30 is dependent on the presence of abscisic acid (ABA). Interacts with PP2C51. Binding to PP2C51 is dependent on the presence of ABA. Interacts with PP2C50. Binding to PP2C50 is dependent on the presence of ABA. Interacts with PP2C53. Expressed in leaf sheaths and leaf blades. Expressed at low levels in roots, flowers and seeds.

The protein localises to the nucleus. The protein resides in the cytoplasm. It localises to the cytosol. Its function is as follows. Intracellular abscisic acid (ABA) receptor that functions as a positive regulator of ABA signaling pathway. Together with ABI5, PP2C30 and SAPK2, is part of an ABA signaling unit that modulates seed germination and early seedling growth. Acts as a positive regulator of abiotic stress-responsive gene expression. Inhibits the protein phosphatases PP2C06 and PP2C09 when activated by ABA. The chain is Abscisic acid receptor PYL5 from Oryza sativa subsp. japonica (Rice).